The primary structure comprises 238 residues: uncharacterized protein (238 aa).

The next 4 helical transmembrane spans lie at 16 to 36 (HLII…IGLE), 44 to 64 (VGVK…IVSI), 81 to 101 (PMRL…GVIL), and 123 to 143 (IGIA…VMIL).

This sequence belongs to the MgtC/SapB family.

The protein resides in the cell inner membrane. This is an uncharacterized protein from Haemophilus influenzae (strain ATCC 51907 / DSM 11121 / KW20 / Rd).